The primary structure comprises 815 residues: Leucine--tRNA ligase (815 aa).

A 'HIGH' region motif is present at residues 41 to 51; that stretch reads PYPSGTLHVGH. A 'KMSKS' region motif is present at residues 576–580; the sequence is KMSKS. Lys579 serves as a coordination point for ATP.

The protein belongs to the class-I aminoacyl-tRNA synthetase family.

It is found in the cytoplasm. It carries out the reaction tRNA(Leu) + L-leucine + ATP = L-leucyl-tRNA(Leu) + AMP + diphosphate. This Pseudothermotoga lettingae (strain ATCC BAA-301 / DSM 14385 / NBRC 107922 / TMO) (Thermotoga lettingae) protein is Leucine--tRNA ligase.